Reading from the N-terminus, the 407-residue chain is uncharacterized protein (407 aa).

The 250-residue stretch at 1-250 (MLDPLDILTN…LERDVLKQRL (250 aa)) folds into the EAL domain.

This is an uncharacterized protein from Bacillus subtilis (strain 168).